Consider the following 393-residue polypeptide: Short-chain dehydrogenase/reductase family 42E member 1 (393 aa).

Tyrosine 152 serves as the catalytic Proton acceptor. Lysine 156 contributes to the NAD(+) binding site. A run of 2 helical transmembrane segments spans residues 282–302 (LPLTLIYCFAFLTEMTHFILG) and 371–391 (GLVILLVVTVVLVWLLPSVIL).

Belongs to the 3-beta-HSD family.

The protein resides in the membrane. The protein is Short-chain dehydrogenase/reductase family 42E member 1 (SDR42E1) of Bos taurus (Bovine).